The sequence spans 304 residues: Coenzyme PQQ synthesis protein B (304 aa).

The protein belongs to the PqqB family.

The protein operates within cofactor biosynthesis; pyrroloquinoline quinone biosynthesis. Functionally, may be involved in the transport of PQQ or its precursor to the periplasm. The sequence is that of Coenzyme PQQ synthesis protein B from Azoarcus sp. (strain BH72).